A 226-amino-acid polypeptide reads, in one-letter code: Probable amino-acid ABC transporter permease protein YckA (226 aa).

The 189-residue stretch at 27–215 (IGYTLLISFV…AICSIAAVFQ (189 aa)) folds into the ABC transmembrane type-1 domain. 5 helical membrane-spanning segments follow: residues 31 to 51 (LLIS…ISLA), 73 to 93 (VPIL…GIEF), 94 to 114 (SAVT…IAEI), 160 to 180 (VLLD…PELL), and 194 to 214 (MTMY…AAVF).

This sequence belongs to the binding-protein-dependent transport system permease family. HisMQ subfamily.

It is found in the cell membrane. In terms of biological role, part of a binding-protein-dependent transport system. Probably responsible for the translocation of the substrate across the membrane. The sequence is that of Probable amino-acid ABC transporter permease protein YckA (yckA) from Bacillus subtilis (strain 168).